The sequence spans 327 residues: Phenylalanine--tRNA ligase alpha subunit (327 aa).

Glutamate 253 contributes to the Mg(2+) binding site.

This sequence belongs to the class-II aminoacyl-tRNA synthetase family. Phe-tRNA synthetase alpha subunit type 1 subfamily. As to quaternary structure, tetramer of two alpha and two beta subunits. The cofactor is Mg(2+).

Its subcellular location is the cytoplasm. The catalysed reaction is tRNA(Phe) + L-phenylalanine + ATP = L-phenylalanyl-tRNA(Phe) + AMP + diphosphate + H(+). The chain is Phenylalanine--tRNA ligase alpha subunit from Laribacter hongkongensis (strain HLHK9).